The primary structure comprises 324 residues: Glyceraldehyde-3-phosphate dehydrogenase 1 (324 aa).

Residues 13–14 (RI), Asp35, and Lys85 each bind NAD(+). Residues 157-159 (SCT), Thr188, 217-218 (TG), and Arg240 contribute to the D-glyceraldehyde 3-phosphate site. Cys158 serves as the catalytic Nucleophile. Residue Asn322 participates in NAD(+) binding.

This sequence belongs to the glyceraldehyde-3-phosphate dehydrogenase family. In terms of assembly, homotetramer.

The protein resides in the cytoplasm. The enzyme catalyses D-glyceraldehyde 3-phosphate + phosphate + NAD(+) = (2R)-3-phospho-glyceroyl phosphate + NADH + H(+). Its pathway is carbohydrate degradation; glycolysis; pyruvate from D-glyceraldehyde 3-phosphate: step 1/5. The chain is Glyceraldehyde-3-phosphate dehydrogenase 1 (GPD-1) from Globodera rostochiensis (Golden nematode worm).